We begin with the raw amino-acid sequence, 520 residues long: Putative cytochrome P450 CYP13A5 (520 aa).

Cys464 is a heme binding site.

The protein belongs to the cytochrome P450 family. Heme serves as cofactor.

Cytochromes P450 are a group of heme-thiolate monooxygenases. They oxidize a variety of structurally unrelated compounds, including steroids, fatty acids, and xenobiotics. This is Putative cytochrome P450 CYP13A5 (cyp-13A5) from Caenorhabditis elegans.